Here is a 252-residue protein sequence, read N- to C-terminus: CLAVATA3/ESR (CLE)-related protein 4A-1 (252 aa).

Residues 1–21 (MAKNAMLCLLILRVVLALAFA) form the signal peptide. The segment at 21–83 (ATNKKGDEEP…SNQLPNNNWM (63 aa)) is required for secretion from the host cytoplasm to the host apoplasm. An N-linked (GlcNAc...) asparagine glycan is attached at Asn-32. The interval 116 to 252 (RKTGMHSQRH…APAGPDPIHH (137 aa)) is disordered. Composition is skewed to basic and acidic residues over residues 125–137 (HHEE…EKRV) and 144–242 (PIHH…EKRG). One copy of the A-1 repeat lies at 127 to 135 (EETTLEQEK). Residues 127–219 (EETTLEQEKR…HEETTLEQEK (93 aa)) form a 6 X approximate repeat A region. The CLE-1 repeat unit spans residues 136–147 (RVAGAGPDPIHH). The segment at 136–252 (RVAGAGPDPI…APAGPDPIHH (117 aa)) is 6 X approximate repeat CLE. One copy of the A-2 repeat lies at 148–156 (QDTTLEQEK). A CLE-2 repeat occupies 157–168 (RAVPAGPDPKHH). Residues 169-177 (EETTLEQEK) form an A-3 repeat. The stretch at 178–189 (RAVPAGPDPKHH) is one CLE-3 repeat. The stretch at 190-198 (EETTLEQEK) is one A-4 repeat. The CLE-4 repeat unit spans residues 199 to 210 (RAVPAGPDPKHH). An A-5 repeat occupies 211 to 219 (EETTLEQEK). A CLE-5 repeat occupies 220 to 231 (RAVPAGPDPKHH). The A-6 repeat unit spans residues 232–240 (EETTFEQEK). Residues 241-252 (RGAPAGPDPIHH) form a CLE-6 repeat.

Belongs to the CLV3/ESR signal peptide family. Highly expressed exclusively within the dorsal esophageal gland cell during syncytium formation in host plants.

The protein localises to the secreted. The protein resides in the host cytoplasm. It localises to the host extracellular space. Its subcellular location is the extracellular space. It is found in the apoplast. In terms of biological role, mimics host plant CLE extracellular signal peptides that regulate cell fate. May play a role in the differentiation or division of feeding cells (syncytia) induced in plant roots during infection. The chain is CLAVATA3/ESR (CLE)-related protein 4A-1 (CLE-4A-1) from Globodera rostochiensis (Golden nematode worm).